The sequence spans 1559 residues: MTQKTIQQVPRQGLELLASTQDLAQLCYIYGEPAEGEDSTADESIINTPQCSTIPEVAVEPEVQPIPDTPLTAIFIIRALVARKLRRSETEIDPSRSIKELCGGKSTLQNELIGELGNEFQTSLPDRAEDVSLADLDAALGEVSLGPTSVSLLQRVFTAKMPARMTVSNVRERLAEIWGLGFHRQTAVLVAALAAEPHSRLTSLEAAYQYWDGLTEAYGQSLGLFLRKAISQQAARSDDQGAQAIAPADSLGSKDLARKQYEALREYLGIRTPTTKQDGLDLADLQQKLDCWTAEFSDDFLSQISRRFDARKTRWYRDWWNSARQELLTICQNSNVQWTDKMREHFVQRAEEGLVEIARAHSLAKPLVPDLIQAISLPPVVRLGRLATMMPRTVVTLKGEIQCEEHEREPSCFVEFFSSWIQANNIRCTIQSNGEDLTSVFINSLVHASQQGVSFANHTYLITGAGPGSIGQHIVRRLLTGGARVIVTTSREPLPAAAFFKELYSKCGNRGSQLHLVPFNQASVVDCERLIGYIYDDLGLDLDAILPFAATSQVGAEIDGLDASNEAAFRLMLVNVLRLVGFVVSQKRRRGISCRPTQVVLPLSPNHGILGGDGLYAESKRGLETLIQRFHSESWKEELSICGVSIGWTRSTGLMAANDLVAETAEKQGRVLTFSVDEMGDLISLLLTPQLATRCEDAPVMADFSGNLSCWRDASAQLAAARASLRERADTARALAQEDEREYRCRRAGSTQEPVDQRVSLHLGFPSLPEYDPLLHPDLVPADAVVVVGFAELGPWGSARIRWEMESRGCLSPAGYVETAWLMNLIRHVDNVNYVGWVDGEDGKPVADADIPKRYGERILSNAGIRSLPSDNREVFQEIVLEQDLPSFETTRENAEALQQRHGDMVQVSTLKNGLCLVQLQHGATIRVPKSIMSPPGVAGQLPTGWSPERYGIPAEIVQQVDPVALVLLCCVAEAFYSAGISDPMEIFEHIHLSELGNFVGSSMGGVVNTRALYHDVCLDKDVQSDALQETYLNTAPAWVNMLYLGAAGPIKTPVGACATALESVDSAVESIKAGQTKICLVGGYDDLQPEESAGFARMKATVSVRDEQARGREPGEMSRPTAASRSGFVESQGCGVQLLCRGDVALAMGLPIYGIIAGTGMASDGIGRSVPAPGQGILTFAQEDAQNPAPIRTALARWGLGIDDITVASLHATSTPANDTNEPLVIQREMTHLGRTSGRPLWAICQKFVTGHPKAPAAAWMLNGCLQVLDTGLVPGNRNADDVDPALRSFSHLCFPIRSIQTDGIKAFLLNSCGFGQKEAQLVGVHPRYFLGLLSEPEFEEYRTRRQLRIAGAERAYISAMMTNSIVCVQSHPPFGPAEMHSILLDPSARICLDSSTNSYRVTKASTPVYTGFQRPHDKREDPRPSTIGVDTVTLSSFNAHENAIFLQRNYTERERQSLQLQSHRSFRSAVASGWCAKEAVFKCLQTVSKGAGAAMSEIEIVRVQGAPSVLHGDALAAAQKAGLDNIQLSLSYGDDCVVAVALGVRKWCLWPLASIIR.

The 80-residue stretch at 68–147 folds into the Carrier domain; sequence DTPLTAIFII…AALGEVSLGP (80 aa). Ser-106 is subject to O-(pantetheine 4'-phosphoryl)serine. Residues 457–693 are ketoreductase (KR) domain; it reads NHTYLITGAG…SLLLTPQLAT (237 aa). In terms of domain architecture, Ketosynthase family 3 (KS3) spans 873–1327; sequence REVFQEIVLE…QKEAQLVGVH (455 aa). Cys-1058 (for beta-ketoacyl synthase activity) is an active-site residue. Basic and acidic residues predominate over residues 1105–1117; the sequence is VRDEQARGREPGE. Positions 1105–1125 are disordered; that stretch reads VRDEQARGREPGEMSRPTAAS. Catalysis depends on for beta-ketoacyl synthase activity residues His-1212 and His-1253. Asp-1432 is a binding site for Mg(2+). Residues 1432–1434, 1480–1490, 1504–1506, and 1532–1534 each bind acetyl-CoA; these read DTV, EAVFKCLQTVS, RVQ, and LSY. Ser-1533 lines the Mg(2+) pocket.

The protein belongs to the thiolase-like superfamily. Fungal fatty acid synthetase subunit alpha family. [Alpha(6)beta(6)] hexamers of two multifunctional subunits (alpha and beta).

It carries out the reaction acetyl-CoA + n malonyl-CoA + 2n NADPH + 4n H(+) = a long-chain-acyl-CoA + n CoA + n CO2 + 2n NADP(+).. It catalyses the reaction a fatty acyl-[ACP] + malonyl-[ACP] + H(+) = a 3-oxoacyl-[ACP] + holo-[ACP] + CO2. The catalysed reaction is a (3R)-hydroxyacyl-[ACP] + NADP(+) = a 3-oxoacyl-[ACP] + NADPH + H(+). Its pathway is mycotoxin biosynthesis; sterigmatocystin biosynthesis. Its function is as follows. Fatty acid synthase alpha subunit; part of the gene cluster that mediates the biosynthesis of sterigmatocystin (ST), a polyketide-derived furanocoumarin which is part of the most toxic and carcinogenic compounds among the known mycotoxins. The first step in the biosynthesis of sterigmatocystin is the production of hexanoate by the fatty acid synthase (FAS) units stcJ and stcK. The polyketide backbone is assembled by the non-reducing polyketide synthase stcA by condensation of the starter hexanoyl-CoA and 7 malonyl-CoA extender units followed by cyclization and release of norsolorinic acid. Norsolorinic acid is the first stable intermediate in the biosynthesis of sterigmatocystin and is converted into averantin (AVN) by the ketoreductase stcE which reduces the hexanoate ketone to an alcohol. Averantin is then oxidized into 5'-hydroxyaverantin (HAVN) by the cytochrome P450 monooxygenase stcF. 5'-hydroxyaverantin is further converted to 5'-oxyaverantin (OAVN) by the 5'-hydroxyaverantin dehydrogenase stcG. The next step is the conversion of OAVN into averufin (AVF) which is catalyzed by a yet to be identified enzyme. The cytochrome P450 monooxygenase stcB and the flavin-binding monooxygenase stcW are both required for the conversion of averufin to 1-hydroxyversicolorone. The esterase stcI probably catalyzes the formation of versiconal hemiacetal acetate from 1-hydroxyversicolorone. The oxydoreductase stcN then probably catalyzes the biosynthetic step from versiconal to versicolorin B (VERB). The next step is performed by the versicolorin B desaturase stcL to produce versicolorin A (VERA). The ketoreductase stcU and the cytochrome P450 monooxygenase stcS are involved in the conversion of versicolorin A to demethylsterigmatocystin. The Baeyer-Villiger oxidas stcQ and the reductase stcR might be involved in the biosynthetic step from versicolorin A to demethylsterigmatocystin. The final step in the biosynthesis of sterigmatocystin is the methylation of demethylsterigmatocystin catalyzed by the methyltransferase stcP. This is Fatty acid synthase alpha subunit stcJ from Emericella nidulans (strain FGSC A4 / ATCC 38163 / CBS 112.46 / NRRL 194 / M139) (Aspergillus nidulans).